We begin with the raw amino-acid sequence, 221 residues long: Chaperone protein TorD (221 aa).

Belongs to the TorD/DmsD family. TorD subfamily.

It is found in the cytoplasm. Its function is as follows. Involved in the biogenesis of TorA. Acts on TorA before the insertion of the molybdenum cofactor and, as a result, probably favors a conformation of the apoenzyme that is competent for acquiring the cofactor. This chain is Chaperone protein TorD, found in Psychrobacter sp. (strain PRwf-1).